We begin with the raw amino-acid sequence, 318 residues long: Methionyl-tRNA formyltransferase (318 aa).

Residue 111-114 (SLLP) participates in (6S)-5,6,7,8-tetrahydrofolate binding.

Belongs to the Fmt family.

The catalysed reaction is L-methionyl-tRNA(fMet) + (6R)-10-formyltetrahydrofolate = N-formyl-L-methionyl-tRNA(fMet) + (6S)-5,6,7,8-tetrahydrofolate + H(+). In terms of biological role, attaches a formyl group to the free amino group of methionyl-tRNA(fMet). The formyl group appears to play a dual role in the initiator identity of N-formylmethionyl-tRNA by promoting its recognition by IF2 and preventing the misappropriation of this tRNA by the elongation apparatus. The chain is Methionyl-tRNA formyltransferase from Chlorobium limicola (strain DSM 245 / NBRC 103803 / 6330).